Here is a 217-residue protein sequence, read N- to C-terminus: Uracil-DNA glycosylase (217 aa).

Asp62 serves as the catalytic Proton acceptor.

Belongs to the uracil-DNA glycosylase (UDG) superfamily. UNG family.

The protein resides in the cytoplasm. The enzyme catalyses Hydrolyzes single-stranded DNA or mismatched double-stranded DNA and polynucleotides, releasing free uracil.. Excises uracil residues from the DNA which can arise as a result of misincorporation of dUMP residues by DNA polymerase or due to deamination of cytosine. This chain is Uracil-DNA glycosylase, found in Streptococcus pyogenes serotype M28 (strain MGAS6180).